A 103-amino-acid polypeptide reads, in one-letter code: Pro-glucagon (103 aa).

The protein belongs to the glucagon family.

Its subcellular location is the secreted. Functionally, plays a key role in glucose metabolism and homeostasis. Regulates blood glucose by increasing gluconeogenesis and decreasing glycolysis. In Aquarana catesbeiana (American bullfrog), this protein is Pro-glucagon (gcg).